The chain runs to 336 residues: Holliday junction branch migration complex subunit RuvB (336 aa).

The large ATPase domain (RuvB-L) stretch occupies residues 4–184; sequence ADRLISADAI…FGIVQRLEFY (181 aa). Residues Arg-24, Gly-65, Lys-68, Thr-69, Thr-70, 131-133, Arg-174, Tyr-184, and Arg-221 each bind ATP; that span reads EDY. Residue Thr-69 participates in Mg(2+) binding. A small ATPAse domain (RuvB-S) region spans residues 185–255; it reads NVADLQYIVG…VATQALDMLA (71 aa). Positions 258–336 are head domain (RuvB-H); the sequence is TEGFDYMDRK…HFGLTREDLG (79 aa). Arg-294, Arg-313, and Arg-318 together coordinate DNA.

It belongs to the RuvB family. In terms of assembly, homohexamer. Forms an RuvA(8)-RuvB(12)-Holliday junction (HJ) complex. HJ DNA is sandwiched between 2 RuvA tetramers; dsDNA enters through RuvA and exits via RuvB. An RuvB hexamer assembles on each DNA strand where it exits the tetramer. Each RuvB hexamer is contacted by two RuvA subunits (via domain III) on 2 adjacent RuvB subunits; this complex drives branch migration. In the full resolvosome a probable DNA-RuvA(4)-RuvB(12)-RuvC(2) complex forms which resolves the HJ.

It is found in the cytoplasm. The enzyme catalyses ATP + H2O = ADP + phosphate + H(+). In terms of biological role, the RuvA-RuvB-RuvC complex processes Holliday junction (HJ) DNA during genetic recombination and DNA repair, while the RuvA-RuvB complex plays an important role in the rescue of blocked DNA replication forks via replication fork reversal (RFR). RuvA specifically binds to HJ cruciform DNA, conferring on it an open structure. The RuvB hexamer acts as an ATP-dependent pump, pulling dsDNA into and through the RuvAB complex. RuvB forms 2 homohexamers on either side of HJ DNA bound by 1 or 2 RuvA tetramers; 4 subunits per hexamer contact DNA at a time. Coordinated motions by a converter formed by DNA-disengaged RuvB subunits stimulates ATP hydrolysis and nucleotide exchange. Immobilization of the converter enables RuvB to convert the ATP-contained energy into a lever motion, pulling 2 nucleotides of DNA out of the RuvA tetramer per ATP hydrolyzed, thus driving DNA branch migration. The RuvB motors rotate together with the DNA substrate, which together with the progressing nucleotide cycle form the mechanistic basis for DNA recombination by continuous HJ branch migration. Branch migration allows RuvC to scan DNA until it finds its consensus sequence, where it cleaves and resolves cruciform DNA. This chain is Holliday junction branch migration complex subunit RuvB, found in Pectobacterium carotovorum subsp. carotovorum (strain PC1).